Reading from the N-terminus, the 177-residue chain is ATP synthase subunit delta (177 aa).

It belongs to the ATPase delta chain family. In terms of assembly, F-type ATPases have 2 components, F(1) - the catalytic core - and F(0) - the membrane proton channel. F(1) has five subunits: alpha(3), beta(3), gamma(1), delta(1), epsilon(1). F(0) has three main subunits: a(1), b(2) and c(10-14). The alpha and beta chains form an alternating ring which encloses part of the gamma chain. F(1) is attached to F(0) by a central stalk formed by the gamma and epsilon chains, while a peripheral stalk is formed by the delta and b chains.

The protein localises to the cell inner membrane. F(1)F(0) ATP synthase produces ATP from ADP in the presence of a proton or sodium gradient. F-type ATPases consist of two structural domains, F(1) containing the extramembraneous catalytic core and F(0) containing the membrane proton channel, linked together by a central stalk and a peripheral stalk. During catalysis, ATP synthesis in the catalytic domain of F(1) is coupled via a rotary mechanism of the central stalk subunits to proton translocation. Its function is as follows. This protein is part of the stalk that links CF(0) to CF(1). It either transmits conformational changes from CF(0) to CF(1) or is implicated in proton conduction. This chain is ATP synthase subunit delta, found in Neisseria meningitidis serogroup A / serotype 4A (strain DSM 15465 / Z2491).